The following is a 74-amino-acid chain: Small ribosomal subunit protein uS15 (74 aa).

The protein belongs to the universal ribosomal protein uS15 family. Part of the 30S ribosomal subunit. Forms a bridge to the 50S subunit in the 70S ribosome, contacting the 23S rRNA.

One of the primary rRNA binding proteins, it binds directly to 16S rRNA where it helps nucleate assembly of the platform of the 30S subunit by binding and bridging several RNA helices of the 16S rRNA. Functionally, forms an intersubunit bridge (bridge B4) with the 23S rRNA of the 50S subunit in the ribosome. This chain is Small ribosomal subunit protein uS15, found in Aster yellows witches'-broom phytoplasma (strain AYWB).